Consider the following 480-residue polypeptide: Chromosomal replication initiator protein DnaA (480 aa).

Residues Met-1 to Gln-73 form a domain I, interacts with DnaA modulators region. Positions Gln-73–Thr-143 are domain II. A domain III, AAA+ region region spans residues Arg-144–Ala-360. 4 residues coordinate ATP: Gly-188, Gly-190, Lys-191, and Thr-192. Positions Arg-361–Gly-480 are domain IV, binds dsDNA.

This sequence belongs to the DnaA family. Oligomerizes as a right-handed, spiral filament on DNA at oriC.

The protein localises to the cytoplasm. Functionally, plays an essential role in the initiation and regulation of chromosomal replication. ATP-DnaA binds to the origin of replication (oriC) to initiate formation of the DNA replication initiation complex once per cell cycle. Binds the DnaA box (a 9 base pair repeat at the origin) and separates the double-stranded (ds)DNA. Forms a right-handed helical filament on oriC DNA; dsDNA binds to the exterior of the filament while single-stranded (ss)DNA is stabiized in the filament's interior. The ATP-DnaA-oriC complex binds and stabilizes one strand of the AT-rich DNA unwinding element (DUE), permitting loading of DNA polymerase. After initiation quickly degrades to an ADP-DnaA complex that is not apt for DNA replication. Binds acidic phospholipids. In Azoarcus sp. (strain BH72), this protein is Chromosomal replication initiator protein DnaA.